A 327-amino-acid chain; its full sequence is rRNA 2'-O-methyltransferase fibrillarin (327 aa).

The tract at residues 1 to 96 (MGTDYRNSGR…GFKGGAKTMV (96 aa)) is disordered. Asymmetric dimethylarginine occurs at positions 10, 19, 44, 49, 55, 65, 69, and 78. Positions 22–56 (GNDRRDSGRSFGDRRPERPDFKRGDGGRGFGDRRG) are enriched in basic and acidic residues. Over residues 73-90 (DGPGGRGGPGGPGGGFKG) the composition is skewed to gly residues. S-adenosyl-L-methionine is bound by residues 181-182 (TT), 200-201 (EF), 225-226 (DA), and 245-248 (DVAQ).

Belongs to the methyltransferase superfamily. Fibrillarin family. As to quaternary structure, component of box C/D small nucleolar ribonucleoprotein (snoRNP) particles. It is associated with the U3, U8 and U13 small nuclear RNAs. By homology to other fibrillarins, some or all of the N-terminal domain arginines are modified to asymmetric dimethylarginine (DMA).

The protein resides in the nucleus. Its subcellular location is the nucleolus. The enzyme catalyses L-glutaminyl-[histone H2A] + S-adenosyl-L-methionine = N(5)-methyl-L-glutaminyl-[histone H2A] + S-adenosyl-L-homocysteine + H(+). Its function is as follows. S-adenosyl-L-methionine-dependent methyltransferase that has the ability to methylate both RNAs and proteins. Involved in pre-rRNA processing. Utilizes the methyl donor S-adenosyl-L-methionine to catalyze the site-specific 2'-hydroxyl methylation of ribose moieties in pre-ribosomal RNA. Site specificity is provided by a guide RNA that base pairs with the substrate. Methylation occurs at a characteristic distance from the sequence involved in base pairing with the guide RNA. Also acts as a protein methyltransferase by mediating methylation of 'Gln-105' of histone H2A (H2AQ105me), a modification that impairs binding of the FACT complex and is specifically present at 35S ribosomal DNA locus. The chain is rRNA 2'-O-methyltransferase fibrillarin from Giardia intestinalis (Giardia lamblia).